The chain runs to 565 residues: MRWLATFVALLIAISSVSAAEVHIFVDKESVNLGDQIRFQVYFEVNRSADIAVVGDGGDGALLCHVDEGEDLYEKCGEEWVFRIPEDWQEGTYRLKVVIDDTEPEEHSEEFKVVKPKIKEFELKNLVYQSRTELEVLVESANPASLKLRLYGNNVDLYYEETADYEEESNVYSAKFDLNLREVYERTRDIADAVKPGKYILDLKLEYGGKVWDSRRVTVSVVKPEVAVSAPEKVKVGEPVVVSIDTNRVGDTEYDGILVVLEGNNFLLYKKAYLDENGKAKVQFETAGLREGKYAIYVRDTSKTSTLSISDLAKNYYDLPPDNSFSRIIQAEDDVLVKKELWIVGNGKESVKVILQPSKAEIFNGTTMSFKVLLNQSVELSSFEFVIFVSGNSVKIESVTLPDGFRLLDKTLYPDYLKISAYTTNKTKTGFLAEVKVAAQSPGESRLLIKNAGVYNGLGEFVDVTTSQADVVVKESRKEGNTANVSITLKENATGAENVTNNSVTATTPPAKASQQTPAPATPPVSMNVGEIDFTKVFMFTAGFLATYSAGRIMMRKLSARGGKR.

The N-terminal stretch at 1–19 is a signal peptide; it reads MRWLATFVALLIAISSVSA. The span at 494-504 shows a compositional bias: polar residues; sequence TGAENVTNNSV. The segment at 494 to 525 is disordered; that stretch reads TGAENVTNNSVTATTPPAKASQQTPAPATPPV. The segment covering 505–519 has biased composition (low complexity); that stretch reads TATTPPAKASQQTPA.

This is an uncharacterized protein from Archaeoglobus fulgidus (strain ATCC 49558 / DSM 4304 / JCM 9628 / NBRC 100126 / VC-16).